Reading from the N-terminus, the 32-residue chain is ATP synthase subunit O, mitochondrial (32 aa).

Belongs to the ATPase delta chain family. As to quaternary structure, F-type ATPases have 2 components, CF(1) - the catalytic core - and CF(0) - the membrane proton channel. CF(1) has five subunits: alpha(3), beta(3), gamma(1), delta(1), epsilon(1). CF(0) has three main subunits: a, b and c.

Its subcellular location is the mitochondrion. It is found in the mitochondrion inner membrane. Mitochondrial membrane ATP synthase (F(1)F(0) ATP synthase or Complex V) produces ATP from ADP in the presence of a proton gradient across the membrane which is generated by electron transport complexes of the respiratory chain. F-type ATPases consist of two structural domains, F(1) - containing the extramembraneous catalytic core and F(0) - containing the membrane proton channel, linked together by a central stalk and a peripheral stalk. During catalysis, ATP synthesis in the catalytic domain of F(1) is coupled via a rotary mechanism of the central stalk subunits to proton translocation. Part of the complex F(0) domain and the peripheric stalk, which acts as a stator to hold the catalytic alpha(3)beta(3) subcomplex and subunit a/ATP6 static relative to the rotary elements. This is ATP synthase subunit O, mitochondrial from Spinacia oleracea (Spinach).